The sequence spans 410 residues: Cysteine desulfurase IscS (410 aa).

Pyridoxal 5'-phosphate contacts are provided by residues 79–80 (AT), Asn-159, Gln-187, and 207–209 (SGH). Lys-210 bears the N6-(pyridoxal phosphate)lysine mark. Thr-248 provides a ligand contact to pyridoxal 5'-phosphate. Cys-334 serves as the catalytic Cysteine persulfide intermediate. Residue Cys-334 coordinates [2Fe-2S] cluster.

Belongs to the class-V pyridoxal-phosphate-dependent aminotransferase family. NifS/IscS subfamily. In terms of assembly, homodimer. Forms a heterotetramer with IscU, interacts with other sulfur acceptors. Requires pyridoxal 5'-phosphate as cofactor.

The protein localises to the cytoplasm. It catalyses the reaction (sulfur carrier)-H + L-cysteine = (sulfur carrier)-SH + L-alanine. Its pathway is cofactor biosynthesis; iron-sulfur cluster biosynthesis. In terms of biological role, master enzyme that delivers sulfur to a number of partners involved in Fe-S cluster assembly, tRNA modification or cofactor biosynthesis. Catalyzes the removal of elemental sulfur atoms from cysteine to produce alanine. Functions as a sulfur delivery protein for Fe-S cluster synthesis onto IscU, an Fe-S scaffold assembly protein, as well as other S acceptor proteins. In Ehrlichia chaffeensis (strain ATCC CRL-10679 / Arkansas), this protein is Cysteine desulfurase IscS.